Here is a 932-residue protein sequence, read N- to C-terminus: Phosphoenolpyruvate carboxylase (932 aa).

Active-site residues include His164 and Lys594.

The protein belongs to the PEPCase type 1 family. It depends on Mg(2+) as a cofactor.

It carries out the reaction oxaloacetate + phosphate = phosphoenolpyruvate + hydrogencarbonate. Forms oxaloacetate, a four-carbon dicarboxylic acid source for the tricarboxylic acid cycle. This chain is Phosphoenolpyruvate carboxylase, found in Bradyrhizobium diazoefficiens (strain JCM 10833 / BCRC 13528 / IAM 13628 / NBRC 14792 / USDA 110).